The following is a 125-amino-acid chain: Small ribosomal subunit protein uS12 (125 aa).

The residue at position 89 (aspartate 89) is a 3-methylthioaspartic acid. The interval 100 to 125 is disordered; sequence GSLDTQGVQNRKQARSKYGAKRPKKA. Over residues 111–125 the composition is skewed to basic residues; the sequence is KQARSKYGAKRPKKA.

Belongs to the universal ribosomal protein uS12 family. As to quaternary structure, part of the 30S ribosomal subunit. Contacts proteins S8 and S17. May interact with IF1 in the 30S initiation complex.

Functionally, with S4 and S5 plays an important role in translational accuracy. Interacts with and stabilizes bases of the 16S rRNA that are involved in tRNA selection in the A site and with the mRNA backbone. Located at the interface of the 30S and 50S subunits, it traverses the body of the 30S subunit contacting proteins on the other side and probably holding the rRNA structure together. The combined cluster of proteins S8, S12 and S17 appears to hold together the shoulder and platform of the 30S subunit. This Thioalkalivibrio sulfidiphilus (strain HL-EbGR7) protein is Small ribosomal subunit protein uS12.